A 607-amino-acid chain; its full sequence is Methylmalonate-semialdehyde dehydrogenase [acylating], mitochondrial (607 aa).

A disordered region spans residues 1–69 (MVRVKQKNLE…KLRSSSSTTT (69 aa)). A mitochondrion-targeting transit peptide spans 1–98 (MVRVKQKNLE…QFLALRSSWL (98 aa)). Polar residues predominate over residues 9 to 30 (LESYRSNGTYPPTWRNPTTSFA). Basic residues predominate over residues 42–51 (LKSKTKRRRL). Residues F259, K283, E286, K287, and S336 each contribute to the NAD(+) site. Residue C391 is the Nucleophile of the active site. E491 contributes to the NAD(+) binding site.

It belongs to the aldehyde dehydrogenase family.

Its subcellular location is the mitochondrion. The catalysed reaction is 2-methyl-3-oxopropanoate + NAD(+) + CoA + H2O = propanoyl-CoA + hydrogencarbonate + NADH + H(+). In Arabidopsis thaliana (Mouse-ear cress), this protein is Methylmalonate-semialdehyde dehydrogenase [acylating], mitochondrial (ALDH6B2).